A 183-amino-acid polypeptide reads, in one-letter code: Threonylcarbamoyl-AMP synthase (183 aa).

In terms of domain architecture, YrdC-like spans Met-1 to Gly-183.

This sequence belongs to the SUA5 family. TsaC subfamily.

It localises to the cytoplasm. It carries out the reaction L-threonine + hydrogencarbonate + ATP = L-threonylcarbamoyladenylate + diphosphate + H2O. Its function is as follows. Required for the formation of a threonylcarbamoyl group on adenosine at position 37 (t(6)A37) in tRNAs that read codons beginning with adenine. Catalyzes the conversion of L-threonine, HCO(3)(-)/CO(2) and ATP to give threonylcarbamoyl-AMP (TC-AMP) as the acyladenylate intermediate, with the release of diphosphate. This Haemophilus influenzae (strain 86-028NP) protein is Threonylcarbamoyl-AMP synthase.